The chain runs to 473 residues: MAP kinase-activated protein kinase 5 (473 aa).

Residues 22–304 (INWTQKLGAG…IEGVLDHPWL (283 aa)) form the Protein kinase domain. Residues 28–36 (LGAGISGPV) and lysine 51 each bind ATP. Serine 115 carries the post-translational modification Phosphoserine; by PKA. Catalysis depends on aspartate 148, which acts as the Proton acceptor. At threonine 182 the chain carries Phosphothreonine; by MAPK11, MAPK14, MAPK4, MAPK6 and PKA. Phosphoserine occurs at positions 212 and 354. Positions 409–440 (ENEDEKLNEVMQEAWKYNRECKLLRDTLQSFS) form a coiled coil.

It belongs to the protein kinase superfamily. CAMK Ser/Thr protein kinase family. In terms of assembly, interacts with ERK3/MAPK6 and ERK4/MAPK4 (via FRIEDE motif); the interaction is direct. Interacts with YWHAE; the interaction prevents phosphorylation of HSP27/HSPB1 leading to disrupt F-actin polymerization. Interacts with SQSTM1. Post-translationally, phosphorylated on Thr-182 ERK3/MAPK6 or ERK4/MAPK4; which is the regulatory phosphorylation site and is located on the T-loop/loop 12, leading to activation. Phosphorylation at Thr-182 by p38-alpha/MAPK14, p38-beta/MAPK11 is subject to debate. Phosphorylated at Ser-115 by PKA/PRKACA, leading to localization to the cytoplasm. Autophosphorylated. In terms of tissue distribution, expressed ubiquitously.

It localises to the cytoplasm. Its subcellular location is the nucleus. It catalyses the reaction L-seryl-[protein] + ATP = O-phospho-L-seryl-[protein] + ADP + H(+). The enzyme catalyses L-threonyl-[protein] + ATP = O-phospho-L-threonyl-[protein] + ADP + H(+). Activated following phosphorylation at Thr-182 by p38-alpha/MAPK14, p38-beta/MAPK11, ERK2/MAPK1, ERK3/MAPK6, and ERK4/MAPK4. Activated by stress-related extracellular stimuli; such as H(2)O(2), arsenite, anisomycin TNF alpha and also PMA and the calcium ionophore A23187; but to a lesser extent. In vitro, activated by SQSTM1. Inhibited by diterpenoid alkaloid noroxoaconitine. Tumor suppressor serine/threonine-protein kinase involved in mTORC1 signaling and post-transcriptional regulation. Phosphorylates FOXO3, ERK3/MAPK6, ERK4/MAPK4, HSP27/HSPB1, p53/TP53 and RHEB. Acts as a tumor suppressor by mediating Ras-induced senescence and phosphorylating p53/TP53. Involved in post-transcriptional regulation of MYC by mediating phosphorylation of FOXO3: phosphorylation of FOXO3 leads to promote nuclear localization of FOXO3, enabling expression of miR-34b and miR-34c, 2 post-transcriptional regulators of MYC that bind to the 3'UTR of MYC transcript and prevent MYC translation. Acts as a negative regulator of mTORC1 signaling by mediating phosphorylation and inhibition of RHEB. Part of the atypical MAPK signaling via its interaction with ERK3/MAPK6 or ERK4/MAPK4: the precise role of the complex formed with ERK3/MAPK6 or ERK4/MAPK4 is still unclear, but the complex follows a complex set of phosphorylation events: upon interaction with atypical MAPK (ERK3/MAPK6 or ERK4/MAPK4), ERK3/MAPK6 (or ERK4/MAPK4) is phosphorylated and then mediates phosphorylation and activation of MAPKAPK5, which in turn phosphorylates ERK3/MAPK6 (or ERK4/MAPK4). Mediates phosphorylation of HSP27/HSPB1 in response to PKA/PRKACA stimulation, inducing F-actin rearrangement. This is MAP kinase-activated protein kinase 5 (MAPKAPK5) from Homo sapiens (Human).